The following is a 215-amino-acid chain: Uracil phosphoribosyltransferase (215 aa).

Residues arginine 84, arginine 109, and 136–144 contribute to the 5-phospho-alpha-D-ribose 1-diphosphate site; that span reads DPMLATGNT. Uracil-binding positions include isoleucine 198 and 203-205; that span reads GDA. Residue aspartate 204 participates in 5-phospho-alpha-D-ribose 1-diphosphate binding.

It belongs to the UPRTase family. Requires Mg(2+) as cofactor.

The catalysed reaction is UMP + diphosphate = 5-phospho-alpha-D-ribose 1-diphosphate + uracil. It functions in the pathway pyrimidine metabolism; UMP biosynthesis via salvage pathway; UMP from uracil: step 1/1. Its activity is regulated as follows. Allosterically activated by GTP. Its function is as follows. Catalyzes the conversion of uracil and 5-phospho-alpha-D-ribose 1-diphosphate (PRPP) to UMP and diphosphate. This is Uracil phosphoribosyltransferase from Methanothermobacter thermautotrophicus (strain ATCC 29096 / DSM 1053 / JCM 10044 / NBRC 100330 / Delta H) (Methanobacterium thermoautotrophicum).